The following is a 179-amino-acid chain: Large ribosomal subunit protein uL6 (179 aa).

The protein belongs to the universal ribosomal protein uL6 family. As to quaternary structure, part of the 50S ribosomal subunit.

Functionally, this protein binds to the 23S rRNA, and is important in its secondary structure. It is located near the subunit interface in the base of the L7/L12 stalk, and near the tRNA binding site of the peptidyltransferase center. This Prochlorococcus marinus (strain MIT 9312) protein is Large ribosomal subunit protein uL6.